Consider the following 65-residue polypeptide: uncharacterized protein (65 aa).

Positions 1 to 22 (MEKETPQQETKQSTNKESGFFD) are disordered. Residues 7–17 (QQETKQSTNKE) are compositionally biased toward polar residues. A coiled-coil region spans residues 22–65 (DEIIKRTNQLLEKEKELHEKYNKEITSQQDQIDQLKKKINQLKY).

This is an uncharacterized protein from Dictyostelium discoideum (Social amoeba).